The chain runs to 194 residues: Putative manganese efflux pump MntP (194 aa).

Helical transmembrane passes span 3–23, 40–60, 65–85, 109–129, 134–154, and 169–189; these read FYATIILALALSMDAFAVAVC, GFIFGIIEASTPIIGWALGLY, IIQWDHWVAFGLLVILGGRMI, LIATGIATSLDAMAIGVGLAF, IVHTAMTIGMMTMIMATLGML, and IIGGMVLIAIGFNILFEHLDL.

This sequence belongs to the MntP (TC 9.B.29) family.

Its subcellular location is the cell inner membrane. In terms of biological role, probably functions as a manganese efflux pump. The polypeptide is Putative manganese efflux pump MntP (Proteus mirabilis (strain HI4320)).